Consider the following 761-residue polypeptide: Pleckstrin homology domain-containing family M member 3 (761 aa).

Ser-132 carries the post-translational modification Phosphoserine. PH domains follow at residues 211 to 308 and 361 to 456; these read NILK…EVVH and NILK…IAAN. The segment at 669–722 adopts a Phorbol-ester/DAG-type zinc-finger fold; it reads SHVYSCSLCSQKGFICEICNNGEILYPFEDISTSRCESCGAVFHSECKEKSVPC.

As to quaternary structure, interacts with AKT1.

It localises to the cytoplasm. Its subcellular location is the golgi apparatus. The protein localises to the cell membrane. Involved in skeletal muscle differentiation. May act as a scaffold protein for AKT1 during muscle differentiation. The polypeptide is Pleckstrin homology domain-containing family M member 3 (Homo sapiens (Human)).